The sequence spans 141 residues: Lutropin subunit beta (141 aa).

Positions 1-20 (MEMLQGLLLWLLLSMGGARA) are cleaved as a signal peptide. Disulfide bonds link cysteine 29-cysteine 77, cysteine 43-cysteine 92, cysteine 46-cysteine 130, cysteine 54-cysteine 108, cysteine 58-cysteine 110, and cysteine 113-cysteine 120. N-linked (GlcNAc...) asparagine glycosylation is found at asparagine 33 and asparagine 50.

Belongs to the glycoprotein hormones subunit beta family. As to quaternary structure, heterodimer of a common alpha chain and a unique beta chain which confers biological specificity to thyrotropin, lutropin, follitropin and gonadotropin.

The protein localises to the secreted. Promotes spermatogenesis and ovulation by stimulating the testes and ovaries to synthesize steroids. This Macaca fascicularis (Crab-eating macaque) protein is Lutropin subunit beta (LHB).